A 1420-amino-acid polypeptide reads, in one-letter code: Mediator of RNA polymerase II transcription subunit 13 (1420 aa).

Phosphoserine occurs at positions 370, 375, and 425. Residues 416 to 427 show a composition bias toward polar residues; it reads TTVSNDLENSPL. The tract at residues 416-511 is disordered; that stretch reads TTVSNDLENS…TNESNKSISD (96 aa). Over residues 429-439 the composition is skewed to basic and acidic residues; sequence TELEANGRSLE. The span at 440 to 453 shows a compositional bias: polar residues; the sequence is KVNNSVSKTGSVDT. Residues 454–484 show a composition bias toward basic and acidic residues; it reads LHNKEGTLEQREQNENLPSDKSDSMVDKELF. A compositionally biased stretch (low complexity) spans 494-508; it reads GDSNKSNSTNESNKS. The residue at position 601 (Thr-601) is a Phosphothreonine. Ser-608 carries the post-translational modification Phosphoserine; by PKA. Ser-636 carries the phosphoserine modification. Residues 653-691 are disordered; sequence LSSSEEEEDEEENGSSDEDLKSLNVRDDMKPSDNISTNT. A compositionally biased stretch (acidic residues) spans 655–669; that stretch reads SSEEEEDEEENGSSD. The span at 670–683 shows a compositional bias: basic and acidic residues; sequence EDLKSLNVRDDMKP. Ser-748 bears the Phosphoserine mark.

The protein belongs to the Mediator complex subunit 13 family. Component of the SRB8-11 complex which consists of SRB8, SSN2/SRB9, SSN3/SRB10 and SSN8/SRB11. The SRB8-11 complex associates with the Mediator complex. The SSN3/SRB10 and SSN8/SRB11 kinase-cyclin pair also associate with the RNA polymerase II holoenzyme. In terms of processing, phosphorylated. PKA-dependent phosphorylation at 'Ser-608' is enhanced by activation of the RAS signaling pathway.

It is found in the nucleus. In terms of biological role, component of the SRB8-11 complex. The SRB8-11 complex is a regulatory module of the Mediator complex which is itself involved in regulation of basal and activated RNA polymerase II-dependent transcription. The SRB8-11 complex may be involved in the transcriptional repression of a subset of genes regulated by Mediator. It may inhibit the association of the Mediator complex with RNA polymerase II to form the holoenzyme complex. The SRB8-11 complex phosphorylates the C-terminal domain (CTD) of the largest subunit of RNA polymerase II RPB1 at serines 2 and 5. This is Mediator of RNA polymerase II transcription subunit 13 (SSN2) from Saccharomyces cerevisiae (strain ATCC 204508 / S288c) (Baker's yeast).